The chain runs to 415 residues: Putative competence-damage inducible protein (415 aa).

Belongs to the CinA family.

This Listeria innocua serovar 6a (strain ATCC BAA-680 / CLIP 11262) protein is Putative competence-damage inducible protein.